The following is a 509-amino-acid chain: Poly(A) RNA polymerase GLD2-A (509 aa).

The disordered stretch occupies residues 88-107 (PGSPSSSFQNRKRRSDEGNV). Asp-240 and Asp-242 together coordinate Mg(2+). The PAP-associated domain maps to 409–462 (LGDLLLGFLKYFAVEFDWSKDIISVREGKALPRSDDYLWRNKYICVEEPFDGTN).

Belongs to the DNA polymerase type-B-like family. GLD2 subfamily. In terms of assembly, component of a complex at least composed of cpeb1, cpsf1, tent2/gld2, pabpc1/ePAB, parn and sympk. Following oocyte maturation, parn is expelled from the complex. Interacts with rbfox2 and sympk. Requires Mg(2+) as cofactor. The cofactor is Mn(2+).

Its subcellular location is the cytoplasm. The enzyme catalyses RNA(n) + ATP = RNA(n)-3'-adenine ribonucleotide + diphosphate. Its function is as follows. Cytoplasmic poly(A) RNA polymerase that adds successive AMP monomers to the 3'-end of specific RNAs, forming a poly(A) tail. In contrast to the canonical nuclear poly(A) RNA polymerase, it only adds poly(A) to selected cytoplasmic mRNAs during oocyte maturation. Plays a central role during oocyte maturation by mediating polyadenylation of dormant mRNAs, which contain 5'AAUAAA-3' sequence in their 3'UTR. In immature oocytes, polyadenylation of poly(A) tails is counteracted by the ribonuclease parn. During maturation parn is excluded from the ribonucleoprotein complex, allowing poly(A) elongation and activation of mRNAs. May not play a role in replication-dependent histone mRNA degradation. The sequence is that of Poly(A) RNA polymerase GLD2-A (tent2-a) from Xenopus laevis (African clawed frog).